The following is a 795-amino-acid chain: Phenylalanine--tRNA ligase beta subunit (795 aa).

The tRNA-binding domain maps to 39-148 (AGTFNGVVVG…LDAPIGTDLR (110 aa)). The B5 domain occupies 401–476 (PKVNTVQLRR…RIYGYNSIPN (76 aa)). Asp454, Asp460, Glu463, and Glu464 together coordinate Mg(2+). Positions 701 to 794 (SKFPANRRDL…VKQRFNAELR (94 aa)) constitute an FDX-ACB domain.

It belongs to the phenylalanyl-tRNA synthetase beta subunit family. Type 1 subfamily. Tetramer of two alpha and two beta subunits. It depends on Mg(2+) as a cofactor.

It is found in the cytoplasm. The catalysed reaction is tRNA(Phe) + L-phenylalanine + ATP = L-phenylalanyl-tRNA(Phe) + AMP + diphosphate + H(+). This Haemophilus influenzae (strain 86-028NP) protein is Phenylalanine--tRNA ligase beta subunit.